Here is a 329-residue protein sequence, read N- to C-terminus: Glutamine synthetase (329 aa).

Positions 4 to 86 (YKLEYIWLDA…VMCEVMMPDA (83 aa)) constitute a GS beta-grasp domain. One can recognise a GS catalytic domain in the interval 89–329 (PHASNTRATV…GDPYQMLLSS (241 aa)). Residues glutamate 109 and glutamate 111 each coordinate Mg(2+). Glutamate 167 contacts ATP. Glutamate 172 and glutamate 179 together coordinate Mg(2+). An L-glutamate-binding site is contributed by glutamate 278.

The protein belongs to the glutamine synthetase family. As to quaternary structure, homooctamer and homotetramer. It depends on Mg(2+) as a cofactor.

The protein resides in the cytoplasm. It carries out the reaction L-glutamate + NH4(+) + ATP = L-glutamine + ADP + phosphate + H(+). Its function is as follows. Catalyzes the ATP-dependent biosynthesis of glutamine from glutamate and ammonia. The sequence is that of Glutamine synthetase from Rhizobium meliloti (Ensifer meliloti).